We begin with the raw amino-acid sequence, 117 residues long: DNA-directed RNA polymerase subunit omega (117 aa).

Over residues 96–105 (KEEAEEEAKQ) the composition is skewed to basic and acidic residues. The disordered stretch occupies residues 96–117 (KEEAEEEAKQKNSRAAKAAAAE). Positions 108–117 (SRAAKAAAAE) are enriched in low complexity.

This sequence belongs to the RNA polymerase subunit omega family. In terms of assembly, the RNAP catalytic core consists of 2 alpha, 1 beta, 1 beta' and 1 omega subunit. When a sigma factor is associated with the core the holoenzyme is formed, which can initiate transcription.

It carries out the reaction RNA(n) + a ribonucleoside 5'-triphosphate = RNA(n+1) + diphosphate. In terms of biological role, promotes RNA polymerase assembly. Latches the N- and C-terminal regions of the beta' subunit thereby facilitating its interaction with the beta and alpha subunits. The polypeptide is DNA-directed RNA polymerase subunit omega (Lactococcus lactis subsp. cremoris (strain MG1363)).